The primary structure comprises 206 residues: Imidazoleglycerol-phosphate dehydratase (206 aa).

This sequence belongs to the imidazoleglycerol-phosphate dehydratase family.

The protein resides in the cytoplasm. The catalysed reaction is D-erythro-1-(imidazol-4-yl)glycerol 3-phosphate = 3-(imidazol-4-yl)-2-oxopropyl phosphate + H2O. It functions in the pathway amino-acid biosynthesis; L-histidine biosynthesis; L-histidine from 5-phospho-alpha-D-ribose 1-diphosphate: step 6/9. This chain is Imidazoleglycerol-phosphate dehydratase, found in Saccharopolyspora erythraea (strain ATCC 11635 / DSM 40517 / JCM 4748 / NBRC 13426 / NCIMB 8594 / NRRL 2338).